The primary structure comprises 321 residues: Queuosine 5'-phosphate N-glycosylase/hydrolase (321 aa).

Queuine-binding residues include F227, D229, and D296. D229 (nucleophile or transition state stabilizer) is an active-site residue.

It belongs to the QNG1 protein family.

The catalysed reaction is queuosine 5'-phosphate + H2O = queuine + D-ribose 5-phosphate. Its function is as follows. Catalyzes the hydrolysis of queuosine 5'-phosphate, releasing the nucleobase queuine (q). Is required for salvage of queuine from exogenous queuosine (Q) that is imported and then converted to queuosine 5'-phosphate intracellularly. The sequence is that of Queuosine 5'-phosphate N-glycosylase/hydrolase from Dictyostelium discoideum (Social amoeba).